The sequence spans 83 residues: MRLFLSLPVLVVVLSIVLEGPAPAQGAPEVSNPFDGLEELGKTLEDNTREFINRITQSELPAKMWDWFSETFRKVKEKLKIDS.

An N-terminal signal peptide occupies residues 1–26 (MRLFLSLPVLVVVLSIVLEGPAPAQG).

It belongs to the apolipoprotein C1 family.

It is found in the secreted. This chain is Apolipoprotein C-I, acidic form (APOC1A), found in Pan paniscus (Pygmy chimpanzee).